A 305-amino-acid polypeptide reads, in one-letter code: MSISASLVKELRDLTGAGMMDCKTALAETNGDIEAAVDWLRAKGIAKADKKAGRTAAEGLVGVAASGNKAVVVEVNSETDFVARNDAFQDLVRKIAQAALSTDGSTEAVANANVDGKTVTETAKDAVATIGENIGFRRSAALTVPQGVVATYIHNGVADGLGKLGVLVAIETAGDAEAANAFGRQVAMHVAAINPLALTAEDVDPAAAEREKAIFIEQARESGKPDNIIEKMIEGRMRKFYEEVVLLSQAFVINPDLTVAAALKEAEKTIGAPAKITGFVRVALGEGIEKEETDFAAEVAAAAKG.

Residues Thr-79–Val-82 are involved in Mg(2+) ion dislocation from EF-Tu.

It belongs to the EF-Ts family.

The protein resides in the cytoplasm. Its function is as follows. Associates with the EF-Tu.GDP complex and induces the exchange of GDP to GTP. It remains bound to the aminoacyl-tRNA.EF-Tu.GTP complex up to the GTP hydrolysis stage on the ribosome. This Brucella anthropi (strain ATCC 49188 / DSM 6882 / CCUG 24695 / JCM 21032 / LMG 3331 / NBRC 15819 / NCTC 12168 / Alc 37) (Ochrobactrum anthropi) protein is Elongation factor Ts.